The following is a 285-amino-acid chain: Nucleotide-binding protein Psyr_4150 (285 aa).

Residue 8-15 (GRSGSGKS) coordinates ATP. 60–63 (DARN) contributes to the GTP binding site.

The protein belongs to the RapZ-like family.

Displays ATPase and GTPase activities. The polypeptide is Nucleotide-binding protein Psyr_4150 (Pseudomonas syringae pv. syringae (strain B728a)).